Consider the following 440-residue polypeptide: V-type ATP synthase beta chain (440 aa).

The protein belongs to the ATPase alpha/beta chains family.

Produces ATP from ADP in the presence of a proton gradient across the membrane. The V-type beta chain is a regulatory subunit. This is V-type ATP synthase beta chain from Geotalea uraniireducens (strain Rf4) (Geobacter uraniireducens).